Here is a 181-residue protein sequence, read N- to C-terminus: Inner membrane-spanning protein YciB (181 aa).

The next 5 helical transmembrane spans lie at 10–30, 50–70, 72–92, 118–138, and 148–168; these read LIIFFAVYKFFDIYIASGALI, MHLITFAMVTVFGTLTLVFHD, AFIKWKVTIIYALFALALGVS, VTWYWVSFFAICGLVNIYVAF, and FKVFGLTALTLINTVITVFYL.

It belongs to the YciB family.

The protein localises to the cell inner membrane. Plays a role in cell envelope biogenesis, maintenance of cell envelope integrity and membrane homeostasis. The chain is Inner membrane-spanning protein YciB from Shewanella sp. (strain ANA-3).